A 468-amino-acid polypeptide reads, in one-letter code: Protein ABHD15 (468 aa).

Residues 1-23 (MPPWGAALALILAVLALLGLLGP) form the signal peptide. Positions 33–61 (VGERTLPGAQDRDDGEEADGGGPADQFSD) are disordered. Active-site charge relay system residues include D360 and H391. S434 is subject to Phosphoserine.

This sequence belongs to the AB hydrolase superfamily. AB hydrolase 4 family. In terms of assembly, interacts with PDE3B; this interaction regulates PDE3B's stability and expression and, thereby, impacts the antilipolytic action of insulin.

The protein localises to the secreted. In terms of biological role, may regulate adipocyte lipolysis and liver lipid accumulation. This chain is Protein ABHD15, found in Homo sapiens (Human).